The chain runs to 380 residues: Large ribosomal subunit protein mL38 (380 aa).

The N-terminal 26 residues, 1–26 (MAAPWWRAAFSVTGRCRGISTSASLS), are a transit peptide targeting the mitochondrion. Residues 98–123 (SRTQKLQERKRFLQELRANSEEERAA) adopt a coiled-coil conformation.

Belongs to the phosphatidylethanolamine-binding protein family. Mitochondrion-specific ribosomal protein mL38 subfamily. Component of the mitochondrial ribosome large subunit (39S) which comprises a 16S rRNA and about 50 distinct proteins.

The protein resides in the mitochondrion. In Rattus norvegicus (Rat), this protein is Large ribosomal subunit protein mL38 (Mrpl38).